The following is a 282-amino-acid chain: Prohibitin-1 (282 aa).

An AIM motif is present at residues 106 to 109; that stretch reads YQNL.

It belongs to the prohibitin family. In terms of assembly, the mitochondrial prohibitin complex consists of two subunits (phb1 and phb2). The subunits assemble into a membrane-associated ring-shaped supercomplex of approximately 1 mDa.

The protein resides in the mitochondrion inner membrane. It localises to the cytoplasm. Functionally, prohibitin probably acts as a holdase/unfoldase for the stabilization of newly synthesized mitochondrial proteins. Involved in mitophagy; may act as an adapter for atg8 that supports mitophagosome assembly. Negatively regulates the proteolytic processing of atg32 via the i-AAA protease. Acts as a negative regulator of the m-AAA protease. In Schizosaccharomyces pombe (strain 972 / ATCC 24843) (Fission yeast), this protein is Prohibitin-1 (phb1).